Consider the following 246-residue polypeptide: MSELLLGVNVDHIATLRQARGTNYPDPVYAASVAEHAGADGITVHLREDRRHIQDRDIHVLKQTLHTRMNFEMAVTDEMIAIACDVKPVFCCLVPEKREELTTEGGLDVVGQLDKITKATEQLTAAGIAVSLFIDADKAQIDAAVASKAPYIEIHTGHYADLSSEEEQLIELERLTVGIKYAHNLGLKVNAGHGLNYFNVKPIAAIKEIIELNIGHAIIARAAIDGLDKAVRDMKQLMLEARTYNT.

Residue N9 participates in 3-amino-2-oxopropyl phosphate binding. 11 to 12 (DH) serves as a coordination point for 1-deoxy-D-xylulose 5-phosphate. R20 is a 3-amino-2-oxopropyl phosphate binding site. H45 acts as the Proton acceptor in catalysis. 1-deoxy-D-xylulose 5-phosphate is bound by residues R47 and H52. E72 (proton acceptor) is an active-site residue. T102 is a 1-deoxy-D-xylulose 5-phosphate binding site. Residue H193 is the Proton donor of the active site. 3-amino-2-oxopropyl phosphate contacts are provided by residues G194 and 215–216 (GH).

It belongs to the PNP synthase family. As to quaternary structure, homooctamer; tetramer of dimers.

It localises to the cytoplasm. It catalyses the reaction 3-amino-2-oxopropyl phosphate + 1-deoxy-D-xylulose 5-phosphate = pyridoxine 5'-phosphate + phosphate + 2 H2O + H(+). The protein operates within cofactor biosynthesis; pyridoxine 5'-phosphate biosynthesis; pyridoxine 5'-phosphate from D-erythrose 4-phosphate: step 5/5. In terms of biological role, catalyzes the complicated ring closure reaction between the two acyclic compounds 1-deoxy-D-xylulose-5-phosphate (DXP) and 3-amino-2-oxopropyl phosphate (1-amino-acetone-3-phosphate or AAP) to form pyridoxine 5'-phosphate (PNP) and inorganic phosphate. The polypeptide is Pyridoxine 5'-phosphate synthase (Colwellia psychrerythraea (strain 34H / ATCC BAA-681) (Vibrio psychroerythus)).